The chain runs to 725 residues: Golgin candidate 4 (725 aa).

Positions 17–62 are disordered; sequence HDVHDDDEDDDEDLTIYGSTNGGTDRRNSNGFRYSRSPMANGFESP. Positions 21 to 30 are enriched in acidic residues; the sequence is DDDEDDDEDL. A coiled-coil region spans residues 66–132; the sequence is EIERYKAEIN…LKESRLDLSR (67 aa). Disordered stretches follow at residues 134-183, 191-210, and 311-349; these read SNNN…SHKK, LEER…EKER, and ASQK…KEDM. The segment covering 148-175 has biased composition (polar residues); the sequence is NRSQRSPTNWKNRNQMNNGIASKPNGTE. Coiled coils occupy residues 191 to 316, 344 to 407, and 437 to 563; these read LEER…QKST, PGKE…QTNE, and EIRK…LNRM. The span at 324–349 shows a compositional bias: basic and acidic residues; sequence STEDLSRHLSSLDEEKAGTFPGKEDM. Positions 562-613 constitute a GRIP domain; it reads RMSMDSDFLVDRRIVIKLLVTYFQRNHSREVLDLMVRMLGFSEEEKQRIGLA. A compositionally biased stretch (basic and acidic residues) spans 672 to 688; the sequence is ERERREAEDAANKEQEK. A disordered region spans residues 672-725; it reads ERERREAEDAANKEQEKATVSSTQRPKYEQSDSEFSTVPLTSSNSNHRLSRLLT. Positions 711-725 are enriched in low complexity; it reads LTSSNSNHRLSRLLT.

It is found in the golgi apparatus. Functionally, golgi matrix protein playing a role in tethering of vesicles to Golgi membranes and in maintaining the overall structure of the Golgi apparatus. This is Golgin candidate 4 (GC4) from Arabidopsis thaliana (Mouse-ear cress).